The following is a 314-amino-acid chain: Putative glycosyltransferase ORF31 (314 aa).

It belongs to the glycosyltransferase group 1 family.

The protein is Putative glycosyltransferase ORF31 of Haloarcula hispanica (His1V).